A 670-amino-acid chain; its full sequence is WD repeat-containing protein 48 homolog (670 aa).

WD repeat units lie at residues 13-52 (RHRN…SQEP), 59-98 (HHND…CMST), 101-140 (THRD…ALTA), 152-191 (GSKD…KIAK), 194-233 (GHTE…CIQT), 236-275 (VHSE…NSVL), and 278-317 (EERA…KLSN). The disordered stretch occupies residues 321 to 348 (SSNSSINSGGGGDGTPVTNSASNATPAS). Residues 338–348 (TNSASNATPAS) are compositionally biased toward low complexity. One copy of the WD 8 repeat lies at 359–398 (KGGAAIKKYHVLNDKRFMLTKDSEQNVAIYDVLKVKKVED). A compositionally biased stretch (gly residues) spans 613–625 (GGGGGSSTGGGGN). The tract at residues 613–645 (GGGGGSSTGGGGNSNSSQNNSQSDANSEGSQVP) is disordered. Positions 626-635 (SNSSQNNSQS) are enriched in low complexity.

The protein belongs to the WD repeat WDR48 family. As to quaternary structure, catalytic component of the Usp12-46 deubiquitylase complex consisting of Usp12-46, Wdr20 and Uaf1; regulatory subunit that, together wtih Wdr20, stabilizes Usp12-46. The Usp12-46 deubiquitylase complex associates with arr/arrow; the interaction leads to deubiquitination and stabilization of arr/arrow.

Its function is as follows. Regulatory component of the Usp12-46 deubiquitylase complex. activates deubiquitination by increasing the catalytic turnover without increasing the affinity of deubiquitinating enzymes for the substrate. The complex deubiquitylates the wg/wingless-signaling receptor arr/arrow, which stabilizes the receptor and increases its concentration at the cell surface; this enhances the sensitivity of cells to wg/wingless-signal stimulation. This increases the amplitude and spatial range of the signaling response to the wg/wingless morphogen gradient, facilitating the precise concentration-dependent regulation of its target genes. Together with Wdr20 and Usp12-46 required for wg/wingless-mediated signaling in the wing imaginal disc and for wg/wingless-dependent regulation of intestinal stem cell proliferation. The polypeptide is WD repeat-containing protein 48 homolog (Culex quinquefasciatus (Southern house mosquito)).